The chain runs to 325 residues: Replication factor C small subunit (325 aa).

An ATP-binding site is contributed by 44-51 (GPPGTGKT).

The protein belongs to the activator 1 small subunits family. RfcS subfamily. In terms of assembly, heteromultimer composed of small subunits (RfcS) and large subunits (RfcL).

Part of the RFC clamp loader complex which loads the PCNA sliding clamp onto DNA. The polypeptide is Replication factor C small subunit (Thermofilum pendens (strain DSM 2475 / Hrk 5)).